We begin with the raw amino-acid sequence, 664 residues long: UvrABC system protein B (664 aa).

One can recognise a Helicase ATP-binding domain in the interval 24 to 182 (AGLRAGYRHQ…QLIDLQFERN (159 aa)). ATP is bound at residue 37-44 (GATGTGKT). The Beta-hairpin motif lies at 90–113 (YYDEYTPEAYVPSKDLYIEKEASI). Positions 427–593 (QIDDLLGEIR…GIAKGVRDLT (167 aa)) constitute a Helicase C-terminal domain. The UVR domain maps to 624-659 (LKLIKDLEKQMKQAAKALAFEKAAALRDQIVELRQA).

Belongs to the UvrB family. As to quaternary structure, forms a heterotetramer with UvrA during the search for lesions. Interacts with UvrC in an incision complex.

The protein resides in the cytoplasm. The UvrABC repair system catalyzes the recognition and processing of DNA lesions. A damage recognition complex composed of 2 UvrA and 2 UvrB subunits scans DNA for abnormalities. Upon binding of the UvrA(2)B(2) complex to a putative damaged site, the DNA wraps around one UvrB monomer. DNA wrap is dependent on ATP binding by UvrB and probably causes local melting of the DNA helix, facilitating insertion of UvrB beta-hairpin between the DNA strands. Then UvrB probes one DNA strand for the presence of a lesion. If a lesion is found the UvrA subunits dissociate and the UvrB-DNA preincision complex is formed. This complex is subsequently bound by UvrC and the second UvrB is released. If no lesion is found, the DNA wraps around the other UvrB subunit that will check the other stand for damage. The sequence is that of UvrABC system protein B from Chloroflexus aggregans (strain MD-66 / DSM 9485).